Reading from the N-terminus, the 572-residue chain is MEVEKLALKYALINAIEHDGKANPKAVIGKILGENPELRKKAREIVPIVNKIVEEVNTLSLEEQKKKLEEIYPEYFMEGTKKEKEEKKQLPPLPKAEKGKVVTRFAPNPDGAFHLGNARAAILSYEYAKMYDGKFILRFDDTDPKVKRPELIFYDMIIEDLEWLGIKPDEIVYASDRLEIYYKYAEELIKMGKAYVCTCPPDEFRKLRDQGIACPHRDEPVEVQLERWKKMLNGEYREGEAVVRIKTDLNHPNPAVRDWPALRIVDEPNHPRTGNKYRVWPLYNFASAIDDHELGVTHIFRGQEHSENETRQRYIYEYFGWEYPVTVHHGRLSIEGVILSKSKTRKGIEEGKYLGWDDPRLGTIRALRRRGILPEAIRELILEVGLKKSDATVSWDNLAAINRKLVDPIANRYFFVADPIPMYIEEAEEFEAKIPLHPDHPERGYRVLKFEPGKPIYVSKDDLSLLKPGGFIRLKDLFNVEILEVGDTIKARFHSHEYEVARKNKWRMIHWVPEGKECEVIIPEGEELIIRKGLLEKNANVKEGEIVQFERFGFVRIDKIENDKVIAIYAHK.

A 'HIGH' region motif is present at residues 107 to 117 (PNPDGAFHLGN).

The protein belongs to the class-I aminoacyl-tRNA synthetase family. Glutamate--tRNA ligase type 2 subfamily.

The protein resides in the cytoplasm. It catalyses the reaction tRNA(Glu) + L-glutamate + ATP = L-glutamyl-tRNA(Glu) + AMP + diphosphate. Catalyzes the attachment of glutamate to tRNA(Glu) in a two-step reaction: glutamate is first activated by ATP to form Glu-AMP and then transferred to the acceptor end of tRNA(Glu). This chain is Glutamate--tRNA ligase, found in Pyrococcus furiosus (strain ATCC 43587 / DSM 3638 / JCM 8422 / Vc1).